The sequence spans 559 residues: Dihydroxy-acid dehydratase (559 aa).

Asp78 is a Mg(2+) binding site. Cys119 is a [2Fe-2S] cluster binding site. The Mg(2+) site is built by Asp120 and Lys121. At Lys121 the chain carries N6-carboxylysine. Cys192 is a [2Fe-2S] cluster binding site. Mg(2+) is bound at residue Glu446. Ser472 acts as the Proton acceptor in catalysis.

Belongs to the IlvD/Edd family. Homodimer. It depends on [2Fe-2S] cluster as a cofactor. Mg(2+) serves as cofactor.

It catalyses the reaction (2R)-2,3-dihydroxy-3-methylbutanoate = 3-methyl-2-oxobutanoate + H2O. The catalysed reaction is (2R,3R)-2,3-dihydroxy-3-methylpentanoate = (S)-3-methyl-2-oxopentanoate + H2O. It functions in the pathway amino-acid biosynthesis; L-isoleucine biosynthesis; L-isoleucine from 2-oxobutanoate: step 3/4. It participates in amino-acid biosynthesis; L-valine biosynthesis; L-valine from pyruvate: step 3/4. In terms of biological role, functions in the biosynthesis of branched-chain amino acids. Catalyzes the dehydration of (2R,3R)-2,3-dihydroxy-3-methylpentanoate (2,3-dihydroxy-3-methylvalerate) into 2-oxo-3-methylpentanoate (2-oxo-3-methylvalerate) and of (2R)-2,3-dihydroxy-3-methylbutanoate (2,3-dihydroxyisovalerate) into 2-oxo-3-methylbutanoate (2-oxoisovalerate), the penultimate precursor to L-isoleucine and L-valine, respectively. The chain is Dihydroxy-acid dehydratase from Wolinella succinogenes (strain ATCC 29543 / DSM 1740 / CCUG 13145 / JCM 31913 / LMG 7466 / NCTC 11488 / FDC 602W) (Vibrio succinogenes).